The primary structure comprises 131 residues: Fumarate reductase subunit C (131 aa).

The next 3 helical transmembrane spans lie at 30–50 (EGTAVPTVWFSIVLIYGLFAL), 61–81 (IGFLQNPVVVILNLITLAAAL), and 110–130 (IKGLWVVTAVVTVVILFVALF).

The protein belongs to the FrdC family. In terms of assembly, part of an enzyme complex containing four subunits: a flavoprotein (FrdA), an iron-sulfur protein (FrdB), and two hydrophobic anchor proteins (FrdC and FrdD).

It localises to the cell inner membrane. Functionally, two distinct, membrane-bound, FAD-containing enzymes are responsible for the catalysis of fumarate and succinate interconversion; fumarate reductase is used in anaerobic growth, and succinate dehydrogenase is used in aerobic growth. Anchors the catalytic components of the fumarate reductase complex to the cell inner membrane, binds quinones. This chain is Fumarate reductase subunit C, found in Klebsiella pneumoniae subsp. pneumoniae (strain ATCC 700721 / MGH 78578).